A 189-amino-acid polypeptide reads, in one-letter code: MESLEVANGKSSALGVSREASSPPQMGFFIAQVVLRFFTLAFTGAAIAVMVTAKETVEVFSISFTVRYSYLSAFKFLVGADAVVCGFSMLSLIFVSIFNKGKSNHYFFLYFHDLILMVLSMSACAAATAVGYVGRYGQDKAAWMAVCGNVKMFCDKALASILLSLIGFICLFLLTIMAARNLRVSGHLI.

At 1–27 (MESLEVANGKSSALGVSREASSPPQMG) the chain is on the cytoplasmic side. A helical membrane pass occupies residues 28–48 (FFIAQVVLRFFTLAFTGAAIA). At 49–77 (VMVTAKETVEVFSISFTVRYSYLSAFKFL) the chain is on the extracellular side. The helical transmembrane segment at 78 to 98 (VGADAVVCGFSMLSLIFVSIF) threads the bilayer. At 99–113 (NKGKSNHYFFLYFHD) the chain is on the cytoplasmic side. A helical membrane pass occupies residues 114–134 (LILMVLSMSACAAATAVGYVG). The Extracellular segment spans residues 135–156 (RYGQDKAAWMAVCGNVKMFCDK). A helical membrane pass occupies residues 157–177 (ALASILLSLIGFICLFLLTIM). The Cytoplasmic segment spans residues 178 to 189 (AARNLRVSGHLI).

This sequence belongs to the Casparian strip membrane proteins (CASP) family. Homodimer and heterodimers.

Its subcellular location is the cell membrane. The polypeptide is CASP-like protein 1F2 (Vitis vinifera (Grape)).